A 555-amino-acid chain; its full sequence is Methyl-coenzyme M reductase subunit alpha (555 aa).

Gln-152 provides a ligand contact to coenzyme F430. Residues Arg-230, 261 to 262 (KH), and Arg-275 contribute to the coenzyme B site. 2 residues coordinate coenzyme M: Tyr-337 and Tyr-448.

It belongs to the methyl-coenzyme M reductase alpha subunit family. As to quaternary structure, MCR is a hexamer of two alpha, two beta, and two gamma chains, forming a dimer of heterotrimers. Coenzyme F430 serves as cofactor.

It localises to the cytoplasm. The catalysed reaction is coenzyme B + methyl-coenzyme M = methane + coenzyme M-coenzyme B heterodisulfide. The protein operates within one-carbon metabolism; methyl-coenzyme M reduction; methane from methyl-coenzyme M: step 1/1. Functionally, component of the methyl-coenzyme M reductase (MCR) I that catalyzes the reductive cleavage of methyl-coenzyme M (CoM-S-CH3 or 2-(methylthio)ethanesulfonate) using coenzyme B (CoB or 7-mercaptoheptanoylthreonine phosphate) as reductant which results in the production of methane and the mixed heterodisulfide of CoB and CoM (CoM-S-S-CoB). This is the final step in methanogenesis. In Methanococcus voltae, this protein is Methyl-coenzyme M reductase subunit alpha (mcrA).